A 136-amino-acid chain; its full sequence is Active regulator of SIRT1 (136 aa).

A Citrulline modification is found at Arg7. Positions 13–58 are disordered; the sequence is LAASEAPRDPPGQAKPRGAPVKRPRKTKAIQAQKLRNSAKGKVPKS. Ser84 bears the Phosphoserine mark.

Belongs to the AROS family. As to quaternary structure, part of the small subunit (SSU) processome, composed of more than 70 proteins and the RNA chaperone small nucleolar RNA (snoRNA) U3. Interacts with RPS19; the interaction is direct and mediates the integration of RPS19 in state post-A1. Interacts with SIRT1. In terms of processing, citrullinated by PADI4. Widely expressed (at protein level).

It localises to the nucleus. The protein localises to the nucleolus. Its function is as follows. Part of the small subunit (SSU) processome, first precursor of the small eukaryotic ribosomal subunit. During the assembly of the SSU processome in the nucleolus, many ribosome biogenesis factors, an RNA chaperone and ribosomal proteins associate with the nascent pre-rRNA and work in concert to generate RNA folding, modifications, rearrangements and cleavage as well as targeted degradation of pre-ribosomal RNA by the RNA exosome. Acts as a chaperone that specifically mediates the integration of RPS19 in state post-A1. Direct regulator of SIRT1. Enhances SIRT1-mediated deacetylation of p53/TP53, thereby participating in inhibition of p53/TP53-mediated transcriptional activity. This is Active regulator of SIRT1 from Homo sapiens (Human).